Here is a 93-residue protein sequence, read N- to C-terminus: DNA-binding protein HU 1 (93 aa).

This sequence belongs to the bacterial histone-like protein family. Homodimer.

It is found in the cytoplasm. Its subcellular location is the nucleoid. Histone-like DNA-binding protein which is capable of wrapping DNA to stabilize it, and thus to prevent its denaturation under extreme environmental conditions. This Streptomyces coelicolor (strain ATCC BAA-471 / A3(2) / M145) protein is DNA-binding protein HU 1 (hup1).